The sequence spans 251 residues: Methionine aminopeptidase (251 aa).

His-79 contributes to the substrate binding site. Residues Asp-96, Asp-107, and His-170 each coordinate a divalent metal cation. A substrate-binding site is contributed by His-177. 2 residues coordinate a divalent metal cation: Glu-204 and Glu-235.

Belongs to the peptidase M24A family. Methionine aminopeptidase type 1 subfamily. Monomer. Co(2+) serves as cofactor. The cofactor is Zn(2+). Requires Mn(2+) as cofactor. Fe(2+) is required as a cofactor.

It carries out the reaction Release of N-terminal amino acids, preferentially methionine, from peptides and arylamides.. Removes the N-terminal methionine from nascent proteins. The N-terminal methionine is often cleaved when the second residue in the primary sequence is small and uncharged (Met-Ala-, Cys, Gly, Pro, Ser, Thr, or Val). Requires deformylation of the N(alpha)-formylated initiator methionine before it can be hydrolyzed. The chain is Methionine aminopeptidase from Borreliella burgdorferi (strain ATCC 35210 / DSM 4680 / CIP 102532 / B31) (Borrelia burgdorferi).